A 38-amino-acid chain; its full sequence is Large ribosomal subunit protein bL36 (38 aa).

It belongs to the bacterial ribosomal protein bL36 family.

The protein is Large ribosomal subunit protein bL36 of Buchnera aphidicola subsp. Baizongia pistaciae (strain Bp).